Reading from the N-terminus, the 392-residue chain is 1-deoxy-D-xylulose 5-phosphate reductoisomerase (392 aa).

The NADPH site is built by Thr-10, Gly-11, Ser-12, Ile-13, Arg-37, Gln-38, and Asn-124. 1-deoxy-D-xylulose 5-phosphate is bound at residue Lys-125. Glu-126 serves as a coordination point for NADPH. Mn(2+) is bound at residue Asp-150. 4 residues coordinate 1-deoxy-D-xylulose 5-phosphate: Ser-151, Glu-152, Ser-179, and His-202. Residue Glu-152 participates in Mn(2+) binding. Residue Gly-208 participates in NADPH binding. Residues Ser-215, Asn-220, Lys-221, and Glu-224 each coordinate 1-deoxy-D-xylulose 5-phosphate. Glu-224 lines the Mn(2+) pocket.

This sequence belongs to the DXR family. The cofactor is Mg(2+). It depends on Mn(2+) as a cofactor.

It catalyses the reaction 2-C-methyl-D-erythritol 4-phosphate + NADP(+) = 1-deoxy-D-xylulose 5-phosphate + NADPH + H(+). It functions in the pathway isoprenoid biosynthesis; isopentenyl diphosphate biosynthesis via DXP pathway; isopentenyl diphosphate from 1-deoxy-D-xylulose 5-phosphate: step 1/6. Catalyzes the NADPH-dependent rearrangement and reduction of 1-deoxy-D-xylulose-5-phosphate (DXP) to 2-C-methyl-D-erythritol 4-phosphate (MEP). This Cupriavidus metallidurans (strain ATCC 43123 / DSM 2839 / NBRC 102507 / CH34) (Ralstonia metallidurans) protein is 1-deoxy-D-xylulose 5-phosphate reductoisomerase.